Reading from the N-terminus, the 837-residue chain is V-type proton ATPase 116 kDa subunit a 1 (837 aa).

Residues 1 to 388 lie on the Cytoplasmic side of the membrane; sequence MGELFRSEEM…DAYGIGSYRE (388 aa). A helical membrane pass occupies residues 389–407; it reads INPAPYTIITFPFLFAVMF. The Vacuolar segment spans residues 408 to 409; the sequence is GD. Residues 410–426 traverse the membrane as a helical segment; that stretch reads FGHGILMTLFAVWMVVR. Residues 427–441 lie on the Cytoplasmic side of the membrane; that stretch reads ESRILSQKIDNELFT. Residues 442–471 form a helical membrane-spanning segment; the sequence is MMFSGRYIILLMGLFSIYTGLIYNDCFSKA. The Vacuolar segment spans residues 472 to 534; the sequence is LNLFGSSWSV…ATNKLTFLNS (63 aa). The chain crosses the membrane as a helical span at residues 535 to 554; sequence FKMKMSVVLGIIHMTFGVAL. At 555 to 572 the chain is on the cytoplasmic side; sequence SLLNHIYFKKPLNIYLGF. Residues 573-593 traverse the membrane as a helical segment; sequence IPEMIFMTTLFGYLVILIIYK. Residues 594–638 are Vacuolar-facing; it reads WCAYDASTSMVAPSLLIHFINMFLFSYQDTSLPMLYKGQMGLQCF. Residues 639–658 form a helical membrane-spanning segment; that stretch reads LVVCAIICVPWMLVVKPLIL. Residues 659-724 are Cytoplasmic-facing; sequence RRQYLRRKHL…DTVVHQAIHT (66 aa). A helical membrane pass occupies residues 725-749; sequence IEYCLGCISNTASYLRLWALSLAHA. Residues 750–770 are Vacuolar-facing; the sequence is QLSEVLWTMVMHVGLSIRSLG. The chain crosses the membrane as a helical span at residues 771-809; sequence GGIALVFVFSAFATLTIAILLIMEGLSAFLHALRLHWVE. At 810-837 the chain is on the cytoplasmic side; that stretch reads FQNKFYMGTGFKFLPFSFENIREGKFDE.

This sequence belongs to the V-ATPase 116 kDa subunit family. In terms of assembly, V-ATPase is a heteromultimeric enzyme made up of two complexes: the ATP-hydrolytic V1 complex and the proton translocation V0 complex. The V1 complex consists of three catalytic AB heterodimers that form a heterohexamer, three peripheral stalks each consisting of EG heterodimers, one central rotor including subunits D and F, and the regulatory subunits C and H. The proton translocation complex V0 consists of the proton transport subunit a, a ring of proteolipid subunits c9c'', rotary subunit d, subunits e and f, and two accessory subunits.

It localises to the cytoplasmic vesicle. The protein resides in the clathrin-coated vesicle membrane. Its subcellular location is the secretory vesicle. It is found in the synaptic vesicle membrane. The protein localises to the melanosome. Functionally, subunit of the V0 complex of vacuolar(H+)-ATPase (V-ATPase), a multisubunit enzyme composed of a peripheral complex (V1) that hydrolyzes ATP and a membrane integral complex (V0) that translocates protons. V-ATPase is responsible for acidifying and maintaining the pH of intracellular compartments and in some cell types, is targeted to the plasma membrane, where it is responsible for acidifying the extracellular environment. Required for assembly and activity of the vacuolar ATPase. The protein is V-type proton ATPase 116 kDa subunit a 1 (atp6v0a1) of Xenopus tropicalis (Western clawed frog).